Consider the following 320-residue polypeptide: 1-aminocyclopropane-1-carboxylate oxidase 3 (320 aa).

Positions 111 to 131 form a coiled coil; sequence NEYRLAMKDFGKRLEILAEEL. The Fe2OG dioxygenase domain maps to 155–256; the sequence is GPTFATKLSN…RMSIASFYNP (102 aa). Positions 180, 182, and 237 each coordinate Fe cation. Position 247 (arginine 247) interacts with 2-oxoglutarate.

It belongs to the iron/ascorbate-dependent oxidoreductase family. Requires Fe(2+) as cofactor.

It catalyses the reaction 1-aminocyclopropane-1-carboxylate + L-ascorbate + O2 = ethene + L-dehydroascorbate + hydrogen cyanide + CO2 + 2 H2O. It participates in alkene biosynthesis; ethylene biosynthesis via S-adenosyl-L-methionine; ethylene from S-adenosyl-L-methionine: step 2/2. Enzyme involved in the ethylene biosynthesis. May promote stem elongation by maximizing the extensibility cells, possibly by activating ethylene biosynthesis, in response to very-long-chain fatty acids (VLCFAs C20:0 to C30:0). This Arabidopsis thaliana (Mouse-ear cress) protein is 1-aminocyclopropane-1-carboxylate oxidase 3.